The primary structure comprises 118 residues: Vacuolar ATPase assembly integral membrane protein vma-21 (118 aa).

At 1–35 (MATRRIISQEKTLLEKDDRIGSSPAASEKSNITPA) the chain is on the cytoplasmic side. A helical membrane pass occupies residues 36–56 (VPASVIIKLLAFTFAMIVIPI). At 57 to 73 (SSYFLTVDRLFKGNSTY) the chain is on the lumenal side. A helical transmembrane segment spans residues 74–94 (AGATAAIMANVVLIGYIIVAM). Topologically, residues 95–118 (AEDQSDQENEKKGGGGKGEGKKDL) are cytoplasmic. Residues 98–118 (QSDQENEKKGGGGKGEGKKDL) form a disordered region. The segment covering 102 to 118 (ENEKKGGGGKGEGKKDL) has biased composition (basic and acidic residues). The Prevents secretion from ER motif lies at 115-118 (KKDL).

Belongs to the VMA21 family.

The protein resides in the endoplasmic reticulum membrane. Its subcellular location is the endoplasmic reticulum-Golgi intermediate compartment membrane. It is found in the cytoplasmic vesicle. The protein localises to the COPII-coated vesicle membrane. Required for the assembly of the V0 complex of the vacuolar ATPase (V-ATPase) in the endoplasmic reticulum. This is Vacuolar ATPase assembly integral membrane protein vma-21 (vma-21) from Neurospora crassa (strain ATCC 24698 / 74-OR23-1A / CBS 708.71 / DSM 1257 / FGSC 987).